The chain runs to 471 residues: Putative multidrug resistance protein MdtD (471 aa).

Residues 1-11 lie on the Periplasmic side of the membrane; sequence MTDLPDSTRWQ. A helical transmembrane segment spans residues 12-32; it reads LWIVAFGFFMQSLDTTIVNTA. Residues 33 to 48 are Cytoplasmic-facing; that stretch reads LPSMAQSLGESPLHMH. Residues 49–69 form a helical membrane-spanning segment; sequence MVIVSYVLTVAVMLPASGWLA. At 70 to 76 the chain is on the periplasmic side; it reads DKVGVRN. Residues 77 to 97 form a helical membrane-spanning segment; that stretch reads IFFTAIVLFTLGSLFCALSGT. Over 98 to 101 the chain is Cytoplasmic; the sequence is LNEL. The chain crosses the membrane as a helical span at residues 102-124; sequence LLARALQGVGGAMMVPVGRLTVM. Over 125–137 the chain is Periplasmic; the sequence is KIVPREQYMAAMT. A helical membrane pass occupies residues 138–158; the sequence is FVTLPGQVGPLLGPALGGLLV. Residues 159–164 lie on the Cytoplasmic side of the membrane; the sequence is EYASWH. The helical transmembrane segment at 165–185 threads the bilayer; it reads WIFLINIPVGIIGAIATLMLM. The Periplasmic segment spans residues 186–196; that stretch reads PNYTMQTRRFD. Residues 197-217 traverse the membrane as a helical segment; the sequence is LSGFLLLAVGMAVLTLALDGS. At 218–224 the chain is on the cytoplasmic side; that stretch reads KGTGLSP. A helical transmembrane segment spans residues 225–245; sequence LAITGLVAVGVVALVLYLLHA. Topologically, residues 246-262 are periplasmic; the sequence is RNNHRALFSLKLFRTRT. Residues 263–283 traverse the membrane as a helical segment; the sequence is FSLGLAGSFAGRIGSGMLPFM. Residues 284 to 285 lie on the Cytoplasmic side of the membrane; it reads TP. Residues 286-306 traverse the membrane as a helical segment; sequence VFLQIGLGFSPFHAGLMMIPM. The Periplasmic portion of the chain corresponds to 307 to 341; the sequence is VLGSMGMKRIVVQVVNRFGYRRVLVATTLGLSLVT. The helical transmembrane segment at 342–362 threads the bilayer; that stretch reads LLFMTTALLGWYYVLPFVLFL. Over 363 to 395 the chain is Cytoplasmic; the sequence is QGMVNSTRFSSMNTLTLKDLPDNLASSGNSLLS. Residues 396–416 traverse the membrane as a helical segment; the sequence is MIMQLSMSIGVTIAGLLLGLF. The Periplasmic segment spans residues 417 to 430; the sequence is GSQHVSVDSGTTQT. The helical transmembrane segment at 431–451 threads the bilayer; the sequence is VFMYTWLSMAFIIALPAFIFA. Over 452 to 471 the chain is Cytoplasmic; the sequence is RVPNDTHQNVAISRRKRSAQ.

It belongs to the major facilitator superfamily. TCR/Tet family.

It localises to the cell inner membrane. This Escherichia coli O127:H6 (strain E2348/69 / EPEC) protein is Putative multidrug resistance protein MdtD.